Reading from the N-terminus, the 301-residue chain is Large ribosomal subunit protein uL18z (301 aa).

The protein belongs to the universal ribosomal protein uL18 family. As to quaternary structure, component of the large ribosomal subunit (LSU). In terms of tissue distribution, expressed in seedlings, roots, stems, leaves, inflorescences and siliques.

It localises to the cytoplasm. It is found in the nucleus. The protein localises to the nucleolus. The protein resides in the nucleoplasm. Functionally, component of the ribosome, a large ribonucleoprotein complex responsible for the synthesis of proteins in the cell. The small ribosomal subunit (SSU) binds messenger RNAs (mRNAs) and translates the encoded message by selecting cognate aminoacyl-transfer RNA (tRNA) molecules. The large subunit (LSU) contains the ribosomal catalytic site termed the peptidyl transferase center (PTC), which catalyzes the formation of peptide bonds, thereby polymerizing the amino acids delivered by tRNAs into a polypeptide chain. The nascent polypeptides leave the ribosome through a tunnel in the LSU and interact with protein factors that function in enzymatic processing, targeting, and the membrane insertion of nascent chains at the exit of the ribosomal tunnel. Seems involved in the regulation of cell proliferation. Essential in leaf polarity establishment, probably having a role for translation in leaf dorsoventral patterning to specify leaf adaxial identity. The sequence is that of Large ribosomal subunit protein uL18z from Arabidopsis thaliana (Mouse-ear cress).